The sequence spans 238 residues: MLTRKQQELLLFIHERMKESGVPPSFDEMKDALDLASKSGIHRLITALEERGFIRRLPNRARALEVIKLPEAYAGNPQVRRGFSPSVIEGSLGKPAAPAPAPKPAPPAENASVVVPVMGRIAAGVPISAIQNNMHDISVPIEMIGSGEHYALEIKGDSMIEAGILDGDTVIIRNASTASIGDIVVALIDDEEATLKRFRRKGASIALEAANPAYETRIFGPDRVKIQGKLVGLIRRYH.

The H-T-H motif DNA-binding region spans 26-46 (FDEMKDALDLASKSGIHRLIT). Catalysis depends on for autocatalytic cleavage activity residues Ser158 and Lys196.

The protein belongs to the peptidase S24 family. Homodimer.

The enzyme catalyses Hydrolysis of Ala-|-Gly bond in repressor LexA.. Represses a number of genes involved in the response to DNA damage (SOS response), including recA and lexA. In the presence of single-stranded DNA, RecA interacts with LexA causing an autocatalytic cleavage which disrupts the DNA-binding part of LexA, leading to derepression of the SOS regulon and eventually DNA repair. In Sinorhizobium medicae (strain WSM419) (Ensifer medicae), this protein is LexA repressor.